The following is a 626-amino-acid chain: MALLSVAPLASKSRLHKTLITSAHHLKPSPTTIPTLPVCTRRKTFTASITMCLTAPVSDDGVKRRIGNHHSNLWDHDFILSLSTPYEAPSYRERAARLISEVKEMFTEIEDGLSITPLNDLLSRLSMVDSIERLGVDRHFKMEIKSALDYVHRYWSEKGIGCGRESGVTDLNSTALGLRTLRLHGYPVSSSVLEQFKDEKGQFATSSIQTDPGEIRTIFNLFRASLVAFPNEKVMEDAQIFSTIYLKEYLEKIPLSSLSRQIEYVMEYGWHTNLPRLEARHYMDVFGDNEMPWMSYVNTEKLLELAKLEFNIFHSIQQRELKHISRWWKDSGFSQMNFVRHRHVEYYTLASCFAIDPEHSAFRVSFAKMCHLGTVLDDIYDTFGTMEELQLFTAAVKRWDPSATDSLPEYMKRVYTVLYETVNEMAQVAKKSQGRDTINYARHAWEAYLDSYMKEAEWISTGCLPTFEEYYENGKISFGYRICMLQPILSMDIPFPHHILQEIDYPSRFSSLAAGILRLKGDTRCYQADSARGEEASCISCYMKENPGLTEEDVVNHIHGMVDDLIKELNWELLKPDCNVPISSKKHAFDICRAFHHGYKYRDGYSVATNEIKDLVMITVLEPVPL.

A chloroplast-targeting transit peptide spans 1-38 (MALLSVAPLASKSRLHKTLITSAHHLKPSPTTIPTLPV). 3 residues coordinate Mg(2+): aspartate 377, aspartate 381, and aspartate 529. The DDXXD motif signature appears at 377–381 (DDIYD).

The protein belongs to the terpene synthase family. Tpsd subfamily. It depends on Mg(2+) as a cofactor. Requires Mn(2+) as cofactor.

Its subcellular location is the plastid. The protein resides in the chloroplast. The enzyme catalyses (2E)-geranyl diphosphate + H2O = (S)-alpha-terpineol + diphosphate. The catalysed reaction is (2E)-geranyl diphosphate + H2O = (R)-alpha-terpineol + diphosphate. It catalyses the reaction (2E)-geranyl diphosphate + H2O = (2E)-geraniol + diphosphate. It carries out the reaction (2E)-geranyl diphosphate = terpinolene + diphosphate. The enzyme catalyses (2E)-geranyl diphosphate = (4S)-limonene + diphosphate. It participates in terpene metabolism; oleoresin biosynthesis. Its pathway is secondary metabolite biosynthesis; terpenoid biosynthesis. Functionally, monoterpene synthase (TPS) involved in the biosynthesis of monoterpene natural products included in conifer oleoresin secretions and volatile emissions; these compounds contribute to biotic and abiotic stress defense against herbivores and pathogens. Catalyzes the conversion of (2E)-geranyl diphosphate (GPP) to (-)-alpha-terpineol, (+)-alpha-terpineol and terpin-4-ol, and, to a lower extent, to geraniol, terpinolene and (-)-limonene. The protein is Alpha terpineol synthase, chloroplastic of Pinus banksiana (Jack pine).